The primary structure comprises 105 residues: uncharacterized protein (105 aa).

The next 3 membrane-spanning stretches (helical) occupy residues 14–34, 41–61, and 80–100; these read ILLMLRLAVTAVAVFLAIVAW, ETVCFIAGVLCMYLAQLFAFL, and VGFTLELLPLACFIASLIFTI.

The protein resides in the cell membrane. This is an uncharacterized protein from Treponema pallidum (strain Nichols).